Consider the following 552-residue polypeptide: MKGCLATMDKELWIERANDSLVKHFYEQQSDIEQREGFESKLTFGTAGIRGKFGLGEGRLNKFTIEKLALGLARYLNAQTNSPTIVIHYDIRHLSTEFAQIIANVLANHQITVYLPDTYKTTPELSFAVRNLNTTAGIMITASHNPKDYNGIKVYGSDGAQLSTDASELASRYIEEVGDPLQIDIPISKQNTSYIKPFPKSVTDDYMKHIQNMIGYIPKSDLQVVFTSLHGTSVPIVPELLQSLNFNQFNLVEAQCKPDPNFSSVQSANPEDHRAFDQAVELANKSHADLLISTDPDADRLGIAERDAHGHITYFNGNQIGALLLNYRIQQTSQLRHRLMIQSIVSSELTKSLARYNNVEYKEVLTGFKFIAQEIRQLDDHQNMIFAFEESYGFLSEPFVRDKDAVQIVPLIIKYASELKLYGKTLKDELEQIYQTVGRHEDTLFSHTLDGLEGKKKIESIMTHFRSNPPQEIQGLKVKAIEDYLTSEVYHLDKDTTSQINSPKSNVIRVLFDEGFIALRPSGTEPKIKLYVSLKCRNFDDVAQKINAMIFS.

S143 functions as the Phosphoserine intermediate in the catalytic mechanism. Mg(2+) contacts are provided by S143, D295, D297, and D299.

It belongs to the phosphohexose mutase family. The cofactor is Mg(2+).

The catalysed reaction is alpha-D-glucose 1-phosphate = alpha-D-glucose 6-phosphate. It functions in the pathway glycolipid metabolism; diglucosyl-diacylglycerol biosynthesis. Its function is as follows. Catalyzes the interconversion between glucose-6-phosphate and alpha-glucose-1-phosphate. This is the first step in the biosynthesis of diglucosyl-diacylglycerol (Glc2-DAG), i.e. the predominant glycolipid found in the S.aureus membrane, which is also used as a membrane anchor for lipoteichoic acid (LTA). This chain is Phosphoglucomutase (pgcA), found in Staphylococcus aureus (strain MSSA476).